A 275-amino-acid polypeptide reads, in one-letter code: 3-methyl-2-oxobutanoate hydroxymethyltransferase (275 aa).

2 residues coordinate Mg(2+): Asp44 and Asp83. Residues 44-45 (DS), Asp83, and Lys113 each bind 3-methyl-2-oxobutanoate. Glu115 lines the Mg(2+) pocket. The active-site Proton acceptor is the Glu182.

This sequence belongs to the PanB family. In terms of assembly, homodecamer; pentamer of dimers. Requires Mg(2+) as cofactor.

It is found in the cytoplasm. It carries out the reaction 3-methyl-2-oxobutanoate + (6R)-5,10-methylene-5,6,7,8-tetrahydrofolate + H2O = 2-dehydropantoate + (6S)-5,6,7,8-tetrahydrofolate. It functions in the pathway cofactor biosynthesis; (R)-pantothenate biosynthesis; (R)-pantoate from 3-methyl-2-oxobutanoate: step 1/2. Its function is as follows. Catalyzes the reversible reaction in which hydroxymethyl group from 5,10-methylenetetrahydrofolate is transferred onto alpha-ketoisovalerate to form ketopantoate. This chain is 3-methyl-2-oxobutanoate hydroxymethyltransferase, found in Clostridium beijerinckii (strain ATCC 51743 / NCIMB 8052) (Clostridium acetobutylicum).